A 218-amino-acid polypeptide reads, in one-letter code: Riboflavin synthase (218 aa).

2 Lumazine-binding repeats span residues 1-97 and 98-194; these read MFTG…LGGH and LVSG…EKLI. Residues 4 to 6, 48 to 50, 62 to 67, 101 to 103, Lys-136, 145 to 147, and 159 to 164 each bind 2,4-dihydroxypteridine; these read GII, CLT, DLSLET, GHV, SLT, and TIVPHT.

As to quaternary structure, homotrimer.

The enzyme catalyses 2 6,7-dimethyl-8-(1-D-ribityl)lumazine + H(+) = 5-amino-6-(D-ribitylamino)uracil + riboflavin. Its pathway is cofactor biosynthesis; riboflavin biosynthesis; riboflavin from 2-hydroxy-3-oxobutyl phosphate and 5-amino-6-(D-ribitylamino)uracil: step 2/2. In terms of biological role, catalyzes the dismutation of two molecules of 6,7-dimethyl-8-ribityllumazine, resulting in the formation of riboflavin and 5-amino-6-(D-ribitylamino)uracil. The chain is Riboflavin synthase (ribE) from Photobacterium leiognathi.